The following is a 153-amino-acid chain: Endoribonuclease YbeY (153 aa).

His-114, His-118, and His-124 together coordinate Zn(2+).

Belongs to the endoribonuclease YbeY family. The cofactor is Zn(2+).

The protein localises to the cytoplasm. Single strand-specific metallo-endoribonuclease involved in late-stage 70S ribosome quality control and in maturation of the 3' terminus of the 16S rRNA. The chain is Endoribonuclease YbeY from Shewanella sp. (strain MR-4).